We begin with the raw amino-acid sequence, 106 residues long: Small ribosomal subunit protein bS20 (106 aa).

Positions 1 to 32 (MAQKKPKRNLSALKRHRQSLKRRLRNKAKKSA) are disordered.

Part of the 30S ribosomal subunit.

In terms of biological role, one of the primary rRNA binding proteins, it binds directly to 16S rRNA where it nucleates assembly of the bottom of the body of the 30S subunit, by binding to several RNA helices of the 16S rRNA. The protein is Small ribosomal subunit protein bS20 (rpsT) of Thermus thermophilus (strain ATCC 27634 / DSM 579 / HB8).